The sequence spans 1351 residues: MSFMGLPLAGQKHCPKSGQMEAMVMTCSLCHQDLPGMGSHLLSCQHLLRKDCFQGLIQELGQIAKAHETVADELISCPGCERVYLTRDVTEHFFLHCVPTEQPKMARNCSECKEKRAAHILCTYCNRWLCSSCTEEHRHSPVPGGPFFPRAQKGSPGVNGGPGDFTLYCPLHTQEVLKLFCETCDMLTCHSCLVVEHKEHRCRHVEEVLQNQRMLLEGVTTQVAHKKSSLQTSAKQIEDRIFEVKHQHRKVENQIKMAKMVLMNELNKQANGLIEELEGITNERKRKLEQQLQSIMVLNRQFEHVQNFINWAVCSKTSVPFLFSKELIVFQMQRLLETSCNTDPGSPWSIRFTWEPNFWTKQLASLGCITTEGGQMSRADAPAYGGLQGSSPFYQSHQSPVAQQEALSHPSHKFQSPAVCSSSVCCSHCSPVSPSLKGQVPPPSIHPAHSFRQPPEMVPQQLGSLQCSALLPREKELACSPHPPKLLQPWLETQPPVEQESTSQRLGQQLTSQPVCIVPPQDVQQGAHAQPTLQTPSIQVQFGHHQKLKLSHFQQQPQQQLPPPPPPLPHPPPPLPPPPQQPHPPLPPSQHLASSQHESPPGPACSQNMDIMHHKFELEEMQKDLELLLQAQQPSLQLSQTKSPQHLQQTIVGQINYIVRQPAPVQSQSQEETLQATDEPPASQGSKPALPLDKNTAAALPQASGEETPLSVPPVDSTIQHSSPNVVRKHSTSLSIMGFSNTLEMELSSTRLERPLEPQIQSVSNLTAGAPQAVPSLLSAPPKMVSSLTSVQNQAMPSLTTSHLQTVPSLVHSTFQSMPNLISDSPQAMASLASDHPQAGPSLMSGHTQAVPSLATCPLQSIPPVSDMQPETGSSSSSGRTSGSLCPRDGADPSLENALCKMESEDSTRFTDLLGQGPIVPGLDAPKDLAIPSELEEPINLSVKKPPLAPVVSTSTALQQYQNPKECENFEQGALELDAKENQSIRAFNSEHKIPYVRLERLKICAASSGEMPVFKLKPQKNDQDGSFLLIIECGTESSSMSIKVSQDRLSEATQAPGLEGRKVTVTSLAGQRPPEVEGTSPEEHRLIPRTPGAKKGPPAPIENEDFCAVCLNGGELLCCDRCPKVFHLSCHVPALLSFPGGEWVCTLCRSLTQPEMEYDCENACYNQPGMRASPGLSMYDQKKCEKLVLSLCCNNLSLPFHEPVSPLARHYYQIIKRPMDLSIIRRKLQKKDPAHYTTPEEVVSDVRLMFWNCAKFNYPDSEVAEAGRCLEVFFEGWLKEIYPEKRFAQPRQEDSDSEEVSSESGCSTPQGFPWPPYMQEGIQPKRRRRHMENERAKRMSFRLANSISQV.

The B box-type 1; atypical zinc-finger motif lies at 105 to 150 (MARNCSECKEKRAAHILCTYCNRWLCSSCTEEHRHSPVPGGPFFPR). Residues Cys109, Cys112, Cys133, His139, Cys169, His172, Cys192, and His197 each contribute to the Zn(2+) site. Residues 164 to 205 (DFTLYCPLHTQEVLKLFCETCDMLTCHSCLVVEHKEHRCRHV) form a B box-type 2 zinc finger. Positions 234-304 (AKQIEDRIFE…IMVLNRQFEH (71 aa)) form a coiled coil. Disordered regions lie at residues 542–608 (FGHH…CSQN), 663–730 (APVQ…VRKH), and 857–895 (CPLQ…DPSL). The segment covering 560–588 (QLPPPPPPLPHPPPPLPPPPQQPHPPLPP) has biased composition (pro residues). Over residues 664-676 (PVQSQSQEETLQA) the composition is skewed to polar residues. Residues 872 to 884 (TGSSSSSGRTSGS) are compositionally biased toward low complexity. Residues 995 to 999 (PYVRL) carry the PxVxL motif motif. The segment at 1067 to 1098 (TSLAGQRPPEVEGTSPEEHRLIPRTPGAKKGP) is disordered. The PHD-type zinc finger occupies 1105–1152 (EDFCAVCLNGGELLCCDRCPKVFHLSCHVPALLSFPGGEWVCTLCRSL). The Bromo domain maps to 1176–1282 (GLSMYDQKKC…VFFEGWLKEI (107 aa)). The interval 1289–1351 (AQPRQEDSDS…FRLANSISQV (63 aa)) is disordered.

Can form homodimers and heterodimers. Interacts with CBX5, CBX1 and CBX3 via PxVxL motif.

It is found in the nucleus. Functionally, may function as transcription repressor; The repressive effects are mediated, at least in part, by recruitment of deacetylase activity. May play a role as negative regulator of postmeiotic genes acting through CBX3 complex formation and centromere association. This Homo sapiens (Human) protein is Tripartite motif-containing protein 66 (TRIM66).